The chain runs to 1744 residues: Tensin-1 (1744 aa).

The disordered stretch occupies residues 15-55 (SPAVNYELPSPGQSITKQVDTPDATRSPRGGQAHRKASRSM). Residues 58–230 (TAAMESSCEL…HYFSGLLSGS (173 aa)) form the Phosphatase tensin-type domain. Residues 235 to 361 (NKPLFLHHVI…GKVEFVFSYG (127 aa)) enclose the C2 tensin-type domain. 7 disordered regions span residues 467–505 (TLSV…SPEE), 569–589 (DELP…SSLD), 666–686 (AQEH…PAWL), 724–797 (PQAP…APSR), 934–956 (GSQQ…QLPH), 982–1077 (RVAG…PGLA), and 1156–1437 (VPSP…GSAV). A compositionally biased stretch (polar residues) spans 468–481 (LSVSSDSGNSTAST). Positions 580–589 (GSLGTLSSLD) are enriched in low complexity. Positions 728 to 753 (ARSTSSREAVQRGLNSWQQQGGSRPP) are enriched in polar residues. The span at 763 to 773 (SHSPSLSSCSP) shows a compositional bias: low complexity. Residues 774–783 (QPSPLQPMPP) are compositionally biased toward pro residues. 2 stretches are compositionally biased toward basic and acidic residues: residues 1004–1014 (TPSDSHYEKSS) and 1041–1054 (RPKE…KEAF). A compositionally biased stretch (polar residues) spans 1060–1069 (ASPSSLTSGG). Composition is skewed to low complexity over residues 1156-1169 (VPSP…IHSV) and 1208-1220 (SAHS…SPSS). Polar residues-rich tracts occupy residues 1344 to 1355 (LSRQSSASGYQP), 1370 to 1380 (GTSTPHSSSPD), and 1405 to 1420 (ERSN…NGKA). Residues 1421 to 1435 (SSPLSSGMSSPSSGS) are compositionally biased toward low complexity. The 110-residue stretch at 1472 to 1581 (WYKPDISREQ…ALPCKLVIPD (110 aa)) folds into the SH2 domain. Positions 1607–1743 (ACNVLFINSV…SRVMLGSGQK (137 aa)) constitute a PTB domain.

Belongs to the PTEN phosphatase protein family. In terms of assembly, binds to actin filaments. Interacts with phosphotyrosine-containing proteins. Tyrosine phosphorylated. As to expression, heart, gizzard, lung and skeletal muscle.

It localises to the cell surface. It is found in the cell junction. Its subcellular location is the focal adhesion. The protein resides in the cytoplasm. The protein localises to the cytoskeleton. In terms of biological role, may act as a protein phosphatase and/or a lipid phosphatase. Involved in fibrillar adhesion formation. Plays a role in cell polarization and migration. May be involved in cartilage development and in linking signal transduction pathways to the cytoskeleton. This is Tensin-1 (TNS1) from Gallus gallus (Chicken).